A 99-amino-acid polypeptide reads, in one-letter code: Small ribosomal subunit protein bS20 (99 aa).

This sequence belongs to the bacterial ribosomal protein bS20 family.

Binds directly to 16S ribosomal RNA. In Thermotoga neapolitana (strain ATCC 49049 / DSM 4359 / NBRC 107923 / NS-E), this protein is Small ribosomal subunit protein bS20.